The sequence spans 553 residues: Serine protease 53 (553 aa).

The signal sequence occupies residues 1–23; it reads MKWCWGPVLLIAGATVLMEGLQA. Peptidase S1 domains lie at 24-273 and 294-526; these read AQRA…ARVQ and VACG…SLDW. The interval 27 to 46 is disordered; sequence ACGQRGPGPPKPQEGNTVPG. Cysteines 62 and 78 form a disulfide. Residues His-77 and Asp-128 each act as charge relay system in the active site. Disulfide bonds link Cys-158–Cys-230, Cys-187–Cys-209, Cys-220–Cys-249, and Cys-326–Cys-342. Active-site charge relay system residues include Ser-224, His-341, and Asp-382. Cystine bridges form between Cys-444–Cys-464 and Cys-474–Cys-502. Ser-478 acts as the Charge relay system in catalysis.

The protein belongs to the peptidase S1 family. As to expression, predominantly detected in testis, liver, heart and ovary, as well as in several tumor cell lines.

The protein localises to the secreted. Functionally, in vitro can degrade the fibrinogen alpha chain of as well as pro-urokinase-type plasminogen activator. The chain is Serine protease 53 (PRSS53) from Homo sapiens (Human).